Reading from the N-terminus, the 518-residue chain is Two-component response regulator-like PRR1 (518 aa).

A Response regulatory domain is found at 29–147 (RILLCDSDPS…ELLNLWTHVW (119 aa)). Disordered regions lie at residues 172–241 (PSDA…PGVM), 266–305 (TPTT…GTDV), and 483–518 (VRQA…SSPE). A compositionally biased stretch (polar residues) spans 196–212 (NQETSTSNQHEYESNPS). Positions 443–485 (RAAALAKFRLKRKERCFDKKVRYVNRKKLAETRPRVRGQFVRQ) constitute a CCT domain.

Belongs to the ARR-like family. Interacts with PIL13. Interacts with PIL15.

The protein localises to the nucleus. Functionally, controls photoperiodic flowering response. Seems to be one of the component of the circadian clock. Expression of several members of the ARR-like family is controlled by circadian rhythm. The particular coordinated sequential expression of PRR73, PRR37, PRR95, PRR59 and PPR1 result to circadian waves that may be at the basis of the endogenous circadian clock. This Oryza sativa subsp. japonica (Rice) protein is Two-component response regulator-like PRR1 (PRR1).